The following is a 365-amino-acid chain: Hematopoietic SH2 domain-containing protein homolog (365 aa).

The 92-residue stretch at 34–125 (WFHGIISRKA…PYNELLTVAC (92 aa)) folds into the SH2 domain. 2 disordered regions span residues 199-278 (QSTD…QQKP) and 335-365 (AEHP…APGY). The segment covering 257 to 277 (QQITPNTPNEGRTQQKNQQQK) has biased composition (polar residues).

In terms of biological role, may be an adapter protein involved in tyrosine kinase signaling. The chain is Hematopoietic SH2 domain-containing protein homolog (hsh2d) from Danio rerio (Zebrafish).